The primary structure comprises 58 residues: Large ribosomal subunit protein uL30 (58 aa).

Belongs to the universal ribosomal protein uL30 family. As to quaternary structure, part of the 50S ribosomal subunit.

The chain is Large ribosomal subunit protein uL30 from Acinetobacter baylyi (strain ATCC 33305 / BD413 / ADP1).